A 1093-amino-acid chain; its full sequence is uncharacterized protein (1093 aa).

This is an uncharacterized protein from Escherichia coli (strain K12).